Consider the following 302-residue polypeptide: uncharacterized protein (302 aa).

This sequence belongs to the HAD-like hydrolase superfamily.

This is an uncharacterized protein from Saccharomyces cerevisiae (strain ATCC 204508 / S288c) (Baker's yeast).